Consider the following 38-residue polypeptide: Photosystem I reaction center subunit IX (38 aa).

The helical transmembrane segment at 4-24 (FLTTAPVFSAIWFTLTAGIMI) threads the bilayer.

This sequence belongs to the PsaJ family.

The protein resides in the plastid. The protein localises to the organellar chromatophore thylakoid membrane. Functionally, may help in the organization of the PsaE and PsaF subunits. This is Photosystem I reaction center subunit IX from Paulinella chromatophora.